Reading from the N-terminus, the 308-residue chain is Nodulation protein D 1 (308 aa).

Residues 6-63 (LDLNLLVALDALMTERKLTAAARRINLSQPAMSAAIARLRTYFGDELFSMQGRELIPT) enclose the HTH lysR-type domain. A DNA-binding region (H-T-H motif) is located at residues 23 to 42 (LTAAARRINLSQPAMSAAIA).

The protein belongs to the LysR transcriptional regulatory family.

Functionally, nodD regulates the expression of the nodABCFE genes which encode other nodulation proteins. NodD is also a negative regulator of its own expression. Binds flavonoids as inducers. This is Nodulation protein D 1 (nodD1) from Rhizobium meliloti (strain 1021) (Ensifer meliloti).